The primary structure comprises 188 residues: MNGVFLAIGALLPICLAGGALLGYAAVRFRVQGDPVAEQVNALLPQTQCGQCGYPGCKPYAEAIAAGDKINKCPPGGEATIRALADLLDLEPEPLDAAEETPPRVAYIREAECIGCTKCIQACPVDAIVGAARLMHTVIADECTGCDLCLEPCPVDCIEMREIPDDVRHWKWPQPSPRLIASDRERAA.

The segment at 1–26 is hydrophobic; the sequence is MNGVFLAIGALLPICLAGGALLGYAA. A 4Fe-4S domain is found at 32-90; the sequence is QGDPVAEQVNALLPQTQCGQCGYPGCKPYAEAIAAGDKINKCPPGGEATIRALADLLDL. Residues cysteine 49, cysteine 52, cysteine 57, cysteine 73, cysteine 113, cysteine 116, cysteine 119, cysteine 123, cysteine 143, cysteine 146, cysteine 149, and cysteine 153 each coordinate [4Fe-4S] cluster. 4Fe-4S ferredoxin-type domains follow at residues 104–133 and 134–163; these read RVAYIREAECIGCTKCIQACPVDAIVGAAR and LMHTVIADECTGCDLCLEPCPVDCIEMREI.

The protein belongs to the 4Fe4S bacterial-type ferredoxin family. RnfB subfamily. The complex is composed of six subunits: RnfA, RnfB, RnfC, RnfD, RnfE and RnfG. [4Fe-4S] cluster is required as a cofactor.

The protein resides in the cell inner membrane. Part of a membrane-bound complex that couples electron transfer with translocation of ions across the membrane. The sequence is that of Ion-translocating oxidoreductase complex subunit B from Pseudomonas aeruginosa (strain LESB58).